A 348-amino-acid polypeptide reads, in one-letter code: Probable dual-specificity RNA methyltransferase RlmN (348 aa).

E89 (proton acceptor) is an active-site residue. A Radical SAM core domain is found at 95–328 (HKNRNTVCVS…VTLRISYGSK (234 aa)). An intrachain disulfide couples C102 to C333. C109, C113, and C116 together coordinate [4Fe-4S] cluster. Residues 159–160 (GE), S191, 214–216 (SLH), and N290 each bind S-adenosyl-L-methionine. C333 acts as the S-methylcysteine intermediate in catalysis.

Belongs to the radical SAM superfamily. RlmN family. [4Fe-4S] cluster is required as a cofactor.

Its subcellular location is the cytoplasm. It carries out the reaction adenosine(2503) in 23S rRNA + 2 reduced [2Fe-2S]-[ferredoxin] + 2 S-adenosyl-L-methionine = 2-methyladenosine(2503) in 23S rRNA + 5'-deoxyadenosine + L-methionine + 2 oxidized [2Fe-2S]-[ferredoxin] + S-adenosyl-L-homocysteine. The enzyme catalyses adenosine(37) in tRNA + 2 reduced [2Fe-2S]-[ferredoxin] + 2 S-adenosyl-L-methionine = 2-methyladenosine(37) in tRNA + 5'-deoxyadenosine + L-methionine + 2 oxidized [2Fe-2S]-[ferredoxin] + S-adenosyl-L-homocysteine. In terms of biological role, specifically methylates position 2 of adenine 2503 in 23S rRNA and position 2 of adenine 37 in tRNAs. In Dictyoglomus turgidum (strain DSM 6724 / Z-1310), this protein is Probable dual-specificity RNA methyltransferase RlmN.